Reading from the N-terminus, the 400-residue chain is Glycine betaine/proline betaine transport system ATP-binding protein ProV (400 aa).

In terms of domain architecture, ABC transporter spans 29–265; it reads LSKEQILEKT…PANDYVRTFF (237 aa). An ATP-binding site is contributed by 61 to 68; the sequence is GLSGSGKS. CBS domains follow at residues 280-341 and 343-400; these read ARRS…GIEA and LIDD…GNNG.

The protein belongs to the ABC transporter superfamily. The complex is composed of two ATP-binding proteins (ProV), two transmembrane proteins (ProW) and a solute-binding protein (ProX).

It localises to the cell inner membrane. Part of the ProU ABC transporter complex involved in glycine betaine and proline betaine uptake. Probably responsible for energy coupling to the transport system. This is Glycine betaine/proline betaine transport system ATP-binding protein ProV from Salmonella typhimurium (strain LT2 / SGSC1412 / ATCC 700720).